Reading from the N-terminus, the 159-residue chain is Putative 4-hydroxy-4-methyl-2-oxoglutarate aldolase (159 aa).

Substrate-binding positions include 74 to 77 and Arg96; that span reads GDNL. Asp97 contributes to the a divalent metal cation binding site.

Belongs to the class II aldolase/RraA-like family. As to quaternary structure, homotrimer. It depends on a divalent metal cation as a cofactor.

It catalyses the reaction 4-hydroxy-4-methyl-2-oxoglutarate = 2 pyruvate. The enzyme catalyses oxaloacetate + H(+) = pyruvate + CO2. Its function is as follows. Catalyzes the aldol cleavage of 4-hydroxy-4-methyl-2-oxoglutarate (HMG) into 2 molecules of pyruvate. Also contains a secondary oxaloacetate (OAA) decarboxylase activity due to the common pyruvate enolate transition state formed following C-C bond cleavage in the retro-aldol and decarboxylation reactions. This chain is Putative 4-hydroxy-4-methyl-2-oxoglutarate aldolase, found in Bacillus anthracis.